The chain runs to 371 residues: MKDDATGADFLLSGYDYELPEDRIAQHPPVERGLSRLLVLDRTTGERIHARFADLAEHLPEGALLVANNSKVLPARLLGHRPTGGKVEFLLLTPLPLVTPLAAGPASGTVEPGWCVAEVEGLLRASKPLRPGDTLSFGDDLRVEVVHKGEFGRSMVLLFWRGELATLFAREGHLPLPPYIRRADGDEDRDRYQTVFAREDRLGSVAAPTAGLHFTPSLRETLTARGHQWAEVTLYVGYGTFSPVRCADIRDHAMHREYVEVTAETVEAIRRAKADGRPVVAVGTTSCRVLEGVATAKGTLEPYAGWTDIFMYPGYTFKVVDHLITNFHLPESSLLMLVSAFAGRERVLATYREAIEEGYRFFSYGDAMLLR.

It belongs to the QueA family. As to quaternary structure, monomer.

The protein localises to the cytoplasm. It catalyses the reaction 7-aminomethyl-7-carbaguanosine(34) in tRNA + S-adenosyl-L-methionine = epoxyqueuosine(34) in tRNA + adenine + L-methionine + 2 H(+). Its pathway is tRNA modification; tRNA-queuosine biosynthesis. Functionally, transfers and isomerizes the ribose moiety from AdoMet to the 7-aminomethyl group of 7-deazaguanine (preQ1-tRNA) to give epoxyqueuosine (oQ-tRNA). This Nitratidesulfovibrio vulgaris (strain DP4) (Desulfovibrio vulgaris) protein is S-adenosylmethionine:tRNA ribosyltransferase-isomerase.